A 100-amino-acid chain; its full sequence is Tetrahydromethanopterin S-methyltransferase subunit B (100 aa).

A helical transmembrane segment spans residues 80–100; that stretch reads KLTNIVYGFILGLIILFALLL.

Belongs to the MtrB family. As to quaternary structure, the complex is composed of 8 subunits; MtrA, MtrB, MtrC, MtrD, MtrE, MtrF, MtrG and MtrH.

It is found in the cell membrane. The catalysed reaction is 5-methyl-5,6,7,8-tetrahydromethanopterin + coenzyme M + 2 Na(+)(in) = 5,6,7,8-tetrahydromethanopterin + methyl-coenzyme M + 2 Na(+)(out). It participates in one-carbon metabolism; methanogenesis from CO(2); methyl-coenzyme M from 5,10-methylene-5,6,7,8-tetrahydromethanopterin: step 2/2. In terms of biological role, part of a complex that catalyzes the formation of methyl-coenzyme M and tetrahydromethanopterin from coenzyme M and methyl-tetrahydromethanopterin. This is an energy-conserving, sodium-ion translocating step. The chain is Tetrahydromethanopterin S-methyltransferase subunit B from Methanothermobacter marburgensis (strain ATCC BAA-927 / DSM 2133 / JCM 14651 / NBRC 100331 / OCM 82 / Marburg) (Methanobacterium thermoautotrophicum).